The sequence spans 1054 residues: CCAAT/enhancer-binding protein zeta (1054 aa).

Basic and acidic residues predominate over residues 1–20 (MAAVKEPLEFHAKRPWRPEE). Disordered regions lie at residues 1–42 (MAAV…GFSL) and 102–160 (VEED…PKVK). Residues 21-34 (AVEDPDEEDEDNTS) are compositionally biased toward acidic residues. Residues 109 to 120 (EKENSSKKEVKI) are compositionally biased toward basic and acidic residues. Residue Ser113 is modified to Phosphoserine. The span at 124–138 (NNKNTAESQRTSVNK) shows a compositional bias: polar residues. Residue Ser629 is modified to Phosphoserine. Position 695 is an N6-acetyllysine (Lys695). Ser835 bears the Phosphoserine mark. Disordered regions lie at residues 873 to 902 (RTKG…DEVS) and 915 to 969 (DEDG…KKRN). 2 stretches are compositionally biased toward acidic residues: residues 882–902 (LDED…DEVS) and 915–933 (DEDG…ESVP). 3 positions are modified to phosphoserine: Ser959, Ser973, and Ser978. Residues 1031-1054 (IIKKKKHFKKKRIKTTQKTKKQRK) are disordered.

Belongs to the CBF/MAK21 family.

The protein resides in the nucleus. Stimulates transcription from the HSP70 promoter. This chain is CCAAT/enhancer-binding protein zeta (CEBPZ), found in Homo sapiens (Human).